Here is an 810-residue protein sequence, read N- to C-terminus: Hemoglobin-haptoglobin utilization protein B (810 aa).

The signal sequence occupies residues 1–22 (MPIPFKPVLAAAAIAQAFPAFA). The TBDR plug domain occupies 34–166 (NEITVTGTHK…LGGAVNYQTK (133 aa)). The region spanning 175–810 (DKPYHLGIKG…SYNFTIEAKF (636 aa)) is the TBDR beta-barrel domain. A TonB C-terminal box motif is present at residues 793-810 (QRFTSPGRSYNFTIEAKF).

This sequence belongs to the TonB-dependent receptor family.

It localises to the cell outer membrane. Its function is as follows. Acts as a receptor for hemoglobin or the hemoglobin/haptoglobin complex and is required for heme uptake. This Neisseria meningitidis serogroup A / serotype 4A (strain DSM 15465 / Z2491) protein is Hemoglobin-haptoglobin utilization protein B (hpuB).